Reading from the N-terminus, the 466-residue chain is UDP-N-acetylmuramoylalanine--D-glutamate ligase (466 aa).

117–123 (GTKGKTT) provides a ligand contact to ATP.

This sequence belongs to the MurCDEF family.

Its subcellular location is the cytoplasm. It catalyses the reaction UDP-N-acetyl-alpha-D-muramoyl-L-alanine + D-glutamate + ATP = UDP-N-acetyl-alpha-D-muramoyl-L-alanyl-D-glutamate + ADP + phosphate + H(+). Its pathway is cell wall biogenesis; peptidoglycan biosynthesis. Cell wall formation. Catalyzes the addition of glutamate to the nucleotide precursor UDP-N-acetylmuramoyl-L-alanine (UMA). This Roseiflexus sp. (strain RS-1) protein is UDP-N-acetylmuramoylalanine--D-glutamate ligase.